We begin with the raw amino-acid sequence, 348 residues long: Protein RecA (348 aa).

Residue 69 to 76 (GPESSGKT) coordinates ATP.

It belongs to the RecA family.

The protein localises to the cytoplasm. Its function is as follows. Can catalyze the hydrolysis of ATP in the presence of single-stranded DNA, the ATP-dependent uptake of single-stranded DNA by duplex DNA, and the ATP-dependent hybridization of homologous single-stranded DNAs. It interacts with LexA causing its activation and leading to its autocatalytic cleavage. In Picosynechococcus sp. (strain ATCC 27264 / PCC 7002 / PR-6) (Agmenellum quadruplicatum), this protein is Protein RecA.